The primary structure comprises 180 residues: p-cumate 2,3-dioxygenase system, small oxygenase component (180 aa).

Belongs to the bacterial ring-hydroxylating dioxygenase beta subunit family. In terms of assembly, the p-cumate 2,3-dioxygenase multicomponent enzyme system is composed of an electron transfer component and a dioxygenase component (iron sulfur protein (ISP)). The electron transfer component is composed of a ferredoxin reductase (CmtAa) and a ferredoxin (CmtAd), and the dioxygenase component is formed of a large alpha subunit (CmtAb) and a small beta subunit (CmtAc).

Its pathway is aromatic compound metabolism; p-cumate degradation; acetaldehyde and pyruvate from p-cumate. Functionally, component of the p-cumate 2,3-dioxygenase multicomponent enzyme system which catalyzes the incorporation of both atoms of molecular oxygen into p-cumate to form cis-2,3-dihydroxy-2,3-dihydro-p-cumate. The beta subunit seems to have a structural role in the holoenzyme. Also able to catalyze the cis-dihydroxylation of indole-2-carboxylate and indole-3-carboxylate. The sequence is that of p-cumate 2,3-dioxygenase system, small oxygenase component from Pseudomonas putida (Arthrobacter siderocapsulatus).